We begin with the raw amino-acid sequence, 620 residues long: MDDTNQFMVSVAKIDAGMAILLTPSFHIIEFPSVLLPNDATAGSIIDISVHHNKEEEIARETAFDDVQKEIFETYGQKLPSPPVLKLKNATQTSIVLEWDPLQLSTARLKSLCLYRNNVRVLNISNPMTTHNAKLSGLSLDTEYDFSLVLDTTAGTFPSKHITIKTLRMIDLTGIQVCVGNMVPNEMEALQKCIERIHARPIQTSVRIDTTHFICSSTGGPEYEKAKAANIPILGLDYLLKCESEGRLVNVSGFYIENRASYNANASINSVEAAQNAAPNLNATTEQPKNTAEVAQGAASAKAPQQTTQQGTQNSANAEPSSSASVPAEAPETEAEQSIDVSSDIGLRSDSSKPNEAPTSSENIKADQPENSTKQENPEEDMQIKDAEEHSNLESTPAAQQTSEVEANNHQEKPSSLPAVEQINVNEENNTPETEGLEDEKEENNTAAESLINQEETTSGEAVTKSTVESSANEEEAEPNEIIEENAVKSLLNQEGPATNEEVEKNNANSENANGLTDEKIIEAPLDTKENSDDDKPSPAAAEDIGTNGAIEEIPQVSEVLEPEKAHTTNLQLNALDKEEDLNITTVKQSSEPTADDNLIPNKEAEIIQSSDEFESVNID.

Residues 79-169 (LPSPPVLKLK…KHITIKTLRM (91 aa)) enclose the Fibronectin type-III domain. The region spanning 167 to 256 (LRMIDLTGIQ…RLVNVSGFYI (90 aa)) is the BRCT domain. 2 disordered regions span residues 287 to 566 (QPKN…PEKA) and 588 to 620 (KQSS…VNID). The span at 303–314 (APQQTTQQGTQN) shows a compositional bias: polar residues. Positions 315–330 (SANAEPSSSASVPAEA) are enriched in low complexity. Polar residues predominate over residues 352-375 (SKPNEAPTSSENIKADQPENSTKQ). The segment covering 382–392 (MQIKDAEEHSN) has biased composition (basic and acidic residues). Residues 393-406 (LESTPAAQQTSEVE) show a composition bias toward polar residues. A compositionally biased stretch (low complexity) spans 424–434 (NVNEENNTPET). Polar residues predominate over residues 445–468 (NTAAESLINQEETTSGEAVTKSTV). The span at 472–484 (ANEEEAEPNEIIE) shows a compositional bias: acidic residues. Positions 506–515 (NNANSENANG) are enriched in polar residues. The segment covering 517 to 537 (TDEKIIEAPLDTKENSDDDKP) has biased composition (basic and acidic residues).

This sequence belongs to the CHS5 family.

It is found in the golgi apparatus. Functionally, required for cell fusion, independently of fus1. Appears to have a role in transporting proteins that are involved in mating. May act as a scaffold to retain cell fusion proteins in the cisternae of the Golgi. Degraded at the onset of mating and this leads to release of cell fusion proteins. This is Cell fusion protein cfr1 (cfr1) from Schizosaccharomyces pombe (strain 972 / ATCC 24843) (Fission yeast).